Reading from the N-terminus, the 507-residue chain is Probable Xaa-Pro aminopeptidase HCBG_01484 (507 aa).

The Mn(2+) site is built by Asp-283, Asp-294, Glu-431, and Glu-469.

The protein belongs to the peptidase M24B family. The cofactor is Mn(2+).

The catalysed reaction is Release of any N-terminal amino acid, including proline, that is linked to proline, even from a dipeptide or tripeptide.. Its function is as follows. Catalyzes the removal of a penultimate prolyl residue from the N-termini of peptides. The protein is Probable Xaa-Pro aminopeptidase HCBG_01484 of Ajellomyces capsulatus (strain G186AR / H82 / ATCC MYA-2454 / RMSCC 2432) (Darling's disease fungus).